The chain runs to 273 residues: Putative pyruvate, phosphate dikinase regulatory protein (273 aa).

153–160 is a binding site for ADP; sequence GVSRTSKS.

This sequence belongs to the pyruvate, phosphate/water dikinase regulatory protein family. PDRP subfamily.

It catalyses the reaction N(tele)-phospho-L-histidyl/L-threonyl-[pyruvate, phosphate dikinase] + ADP = N(tele)-phospho-L-histidyl/O-phospho-L-threonyl-[pyruvate, phosphate dikinase] + AMP + H(+). The catalysed reaction is N(tele)-phospho-L-histidyl/O-phospho-L-threonyl-[pyruvate, phosphate dikinase] + phosphate + H(+) = N(tele)-phospho-L-histidyl/L-threonyl-[pyruvate, phosphate dikinase] + diphosphate. Its function is as follows. Bifunctional serine/threonine kinase and phosphorylase involved in the regulation of the pyruvate, phosphate dikinase (PPDK) by catalyzing its phosphorylation/dephosphorylation. This chain is Putative pyruvate, phosphate dikinase regulatory protein, found in Ehrlichia chaffeensis (strain ATCC CRL-10679 / Arkansas).